The following is a 116-amino-acid chain: MTDKKVIRLRRARKARLKMHELEVVRLCVFRSSQHIYAQVISADGSKVLASASTLDKDLRDGATGNIDAATKVGKLVAERAKAAGVSQVAFDRSGFKYHGRVKALADAAREGGLEF.

The protein belongs to the universal ribosomal protein uL18 family. In terms of assembly, part of the 50S ribosomal subunit; part of the 5S rRNA/L5/L18/L25 subcomplex. Contacts the 5S and 23S rRNAs.

Functionally, this is one of the proteins that bind and probably mediate the attachment of the 5S RNA into the large ribosomal subunit, where it forms part of the central protuberance. The sequence is that of Large ribosomal subunit protein uL18 from Pseudomonas putida (strain GB-1).